We begin with the raw amino-acid sequence, 182 residues long: Large ribosomal subunit protein uL6 (182 aa).

It belongs to the universal ribosomal protein uL6 family. In terms of assembly, part of the 50S ribosomal subunit.

In terms of biological role, this protein binds to the 23S rRNA, and is important in its secondary structure. It is located near the subunit interface in the base of the L7/L12 stalk, and near the tRNA binding site of the peptidyltransferase center. The chain is Large ribosomal subunit protein uL6 from Nostoc punctiforme (strain ATCC 29133 / PCC 73102).